Consider the following 313-residue polypeptide: Homoserine O-succinyltransferase (313 aa).

Cysteine 142 acts as the Acyl-thioester intermediate in catalysis. Residues lysine 163 and serine 192 each contribute to the substrate site. The active-site Proton acceptor is histidine 235. The active site involves glutamate 237. Arginine 249 lines the substrate pocket.

Belongs to the MetA family.

The protein localises to the cytoplasm. The catalysed reaction is L-homoserine + succinyl-CoA = O-succinyl-L-homoserine + CoA. It participates in amino-acid biosynthesis; L-methionine biosynthesis via de novo pathway; O-succinyl-L-homoserine from L-homoserine: step 1/1. Functionally, transfers a succinyl group from succinyl-CoA to L-homoserine, forming succinyl-L-homoserine. The protein is Homoserine O-succinyltransferase of Shewanella baltica (strain OS195).